Here is a 309-residue protein sequence, read N- to C-terminus: Syndecan-1 (309 aa).

The signal sequence occupies residues 1–22 (MRRAALWLWLCALALRLQPVLP). Over 24-253 (IMAVNVPPED…GLLDRKEVLG (230 aa)) the chain is Extracellular. 2 disordered regions span residues 28–57 (NVPP…DITL) and 142–185 (ARAT…GGTS). The segment covering 32-42 (EDQDGSGDDSD) has biased composition (acidic residues). Ser-37 is a glycosylation site (O-linked (Xyl...) (chondroitin sulfate) serine). Residue Asn-43 is glycosylated (N-linked (GlcNAc...) asparagine). 2 O-linked (Xyl...) (heparan sulfate) serine glycosylation sites follow: Ser-45 and Ser-47. Polar residues predominate over residues 142 to 151 (ARATTAQAPV). O-linked (Xyl...) (chondroitin sulfate) serine glycans are attached at residues Ser-205 and Ser-215. The chain crosses the membrane as a helical span at residues 254-274 (GVIAGGLVGLIFAVCLVGFML). At 275–309 (YRMKKKDEGSYSLEEPKQANGGAYQKPTKQEEFYA) the chain is on the cytoplasmic side. The interval 283 to 309 (GSYSLEEPKQANGGAYQKPTKQEEFYA) is disordered. Ser-284 bears the Phosphoserine mark.

This sequence belongs to the syndecan proteoglycan family. Interacts with CDCP1. Interacts (via C-terminus) with TIAM1 (via PDZ domain). Interacts with MDK. In terms of processing, shedding is enhanced by a number of factors such as heparanase, thrombin or EGF. Also by stress and wound healing. PMA-mediated shedding is inhibited by TIMP3.

The protein localises to the membrane. It localises to the secreted. It is found in the extracellular exosome. Its function is as follows. Cell surface proteoglycan that contains both heparan sulfate and chondroitin sulfate and that links the cytoskeleton to the interstitial matrix. Regulates exosome biogenesis in concert with SDCBP and PDCD6IP. Able to induce its own expression in dental mesenchymal cells and also in the neighboring dental epithelial cells via an MSX1-mediated pathway. This chain is Syndecan-1, found in Cricetulus griseus (Chinese hamster).